The following is a 191-amino-acid chain: Flagellar transcriptional regulator FlhC (191 aa).

4 residues coordinate Zn(2+): Cys-137, Cys-140, Cys-157, and Cys-160.

Belongs to the FlhC family. In terms of assembly, heterohexamer composed of two FlhC and four FlhD subunits. Each FlhC binds a FlhD dimer, forming a heterotrimer, and a hexamer assembles by dimerization of two heterotrimers. Zn(2+) serves as cofactor.

The protein localises to the cytoplasm. Functionally, functions in complex with FlhD as a master transcriptional regulator that regulates transcription of several flagellar and non-flagellar operons by binding to their promoter region. Activates expression of class 2 flagellar genes, including fliA, which is a flagellum-specific sigma factor that turns on the class 3 genes. Also regulates genes whose products function in a variety of physiological pathways. This Nitrosomonas eutropha (strain DSM 101675 / C91 / Nm57) protein is Flagellar transcriptional regulator FlhC.